We begin with the raw amino-acid sequence, 184 residues long: Protein N-terminal glutamine amidohydrolase (184 aa).

Residues cysteine 14, histidine 63, and aspartate 78 contribute to the active site.

This sequence belongs to the NTAQ1 family. As to quaternary structure, monomer.

It catalyses the reaction N-terminal L-glutaminyl-[protein] + H2O = N-terminal L-glutamyl-[protein] + NH4(+). Functionally, mediates the side-chain deamidation of N-terminal glutamine residues to glutamate, an important step in N-end rule pathway of protein degradation. Conversion of the resulting N-terminal glutamine to glutamate renders the protein susceptible to arginylation, polyubiquitination and degradation as specified by the N-end rule. Does not act on substrates with internal or C-terminal glutamine and does not act on non-glutamine residues in any position. The chain is Protein N-terminal glutamine amidohydrolase from Caenorhabditis elegans.